The primary structure comprises 678 residues: Penicillin-binding protein activator LpoA (678 aa).

Residues 1 to 26 (MVPSTFSRLKAARCLPVVLAALIFAG) form the signal peptide. Residue Cys27 is the site of N-palmitoyl cysteine attachment. Cys27 carries the S-diacylglycerol cysteine lipid modification. Disordered stretches follow at residues 302–340 (DVAE…PVSA) and 496–528 (ALTG…DDQF). Composition is skewed to low complexity over residues 330-340 (QPAAQPVPVSA) and 513-528 (TTNN…DDQF).

This sequence belongs to the LpoA family. Interacts with PBP1a.

The protein localises to the cell outer membrane. Regulator of peptidoglycan synthesis that is essential for the function of penicillin-binding protein 1A (PBP1a). This chain is Penicillin-binding protein activator LpoA, found in Shigella sonnei (strain Ss046).